The following is a 335-amino-acid chain: MTKEKIGVVLLNMGGPDSLDAIQPFLYNLFSDHDIIQIPKPIQKPVAFLISRLRAKKTKKYYEIMGGKSPQKEQTLQQAQKLQEKLEEDYKVVVAMRYWHPFTEEALNQLFQEKIKKIILLPLYPQYSRTTTGSSFNEFDRRVKRYINPGKFAVLSTLKGTKDPYYYFSNIPIAKINCYFDNPLYIKAMVENIKENLPEDYKDYYFLFTAHSLPEKIILDGDPYKKQTETTVKLIMEHFPNVKYSLAYQSKVGPVKWLEPFTDQEIERLIKEGYKKLIVIPVSFVSEHSETLYELDYLYGNIAKELGAESYIRIPTLKSHPMFIETLKELVIKNS.

Positions 211 and 290 each coordinate Fe cation.

The protein belongs to the ferrochelatase family.

The protein resides in the cytoplasm. It catalyses the reaction heme b + 2 H(+) = protoporphyrin IX + Fe(2+). It participates in porphyrin-containing compound metabolism; protoheme biosynthesis; protoheme from protoporphyrin-IX: step 1/1. Its function is as follows. Catalyzes the ferrous insertion into protoporphyrin IX. The sequence is that of Ferrochelatase from Sulfurihydrogenibium sp. (strain YO3AOP1).